A 217-amino-acid polypeptide reads, in one-letter code: Deoxyribose-phosphate aldolase (217 aa).

Asp-95 (proton donor/acceptor) is an active-site residue. Catalysis depends on Lys-156, which acts as the Schiff-base intermediate with acetaldehyde. Catalysis depends on Lys-184, which acts as the Proton donor/acceptor.

It belongs to the DeoC/FbaB aldolase family. DeoC type 1 subfamily.

It localises to the cytoplasm. It catalyses the reaction 2-deoxy-D-ribose 5-phosphate = D-glyceraldehyde 3-phosphate + acetaldehyde. It participates in carbohydrate degradation; 2-deoxy-D-ribose 1-phosphate degradation; D-glyceraldehyde 3-phosphate and acetaldehyde from 2-deoxy-alpha-D-ribose 1-phosphate: step 2/2. Functionally, catalyzes a reversible aldol reaction between acetaldehyde and D-glyceraldehyde 3-phosphate to generate 2-deoxy-D-ribose 5-phosphate. The polypeptide is Deoxyribose-phosphate aldolase (Thermosynechococcus vestitus (strain NIES-2133 / IAM M-273 / BP-1)).